Here is a 147-residue protein sequence, read N- to C-terminus: Transthyretin (147 aa).

Residues 1–20 (MASLRLFLLCLAGLIFASEA) form the signal peptide. Cys30 carries the sulfocysteine modification. Lys35 serves as a coordination point for L-thyroxine. At Glu62 the chain carries 4-carboxyglutamate. Ser72 carries the phosphoserine modification. Glu74 provides a ligand contact to L-thyroxine. Residue Asn118 is glycosylated (N-linked (GlcNAc...) asparagine). Ser137 is a binding site for L-thyroxine.

The protein belongs to the transthyretin family. In terms of assembly, homotetramer. Dimer of dimers. In the homotetramer, subunits assemble around a central channel that can accommodate two ligand molecules. Interacts with RBP4. Sulfonation of the reactive cysteine Cys-30 enhances the stability of the native conformation of TTR, avoiding misassembly of the protein leading to amyloid formation. In terms of tissue distribution, detected in serum and cerebrospinal fluid (at protein level). Highly expressed in the choroid plexus. Detected at lower levels in the liver.

Its subcellular location is the secreted. Its function is as follows. Thyroid hormone-binding protein. Probably transports thyroxine from the bloodstream to the brain. This Rattus norvegicus (Rat) protein is Transthyretin (Ttr).